Consider the following 101-residue polypeptide: Small ribosomal subunit protein uS14 (101 aa).

It belongs to the universal ribosomal protein uS14 family. In terms of assembly, part of the 30S ribosomal subunit. Contacts proteins S3 and S10.

Its function is as follows. Binds 16S rRNA, required for the assembly of 30S particles and may also be responsible for determining the conformation of the 16S rRNA at the A site. The chain is Small ribosomal subunit protein uS14 from Aromatoleum aromaticum (strain DSM 19018 / LMG 30748 / EbN1) (Azoarcus sp. (strain EbN1)).